The primary structure comprises 354 residues: Zinc finger protein 346 (354 aa).

Matrin-type zinc fingers lie at residues 34–64 (TQCK…KVRR), 95–125 (KCCP…NLRL), 165–195 (KFCK…QETK), and 232–262 (FSCD…QLMS). 8 residues coordinate Zn(2+): Cys-36, Cys-39, His-52, His-58, Cys-97, Cys-100, His-113, and His-119. Residues 263–343 (MTPLSKEGPP…QPYVREDMMG (81 aa)) are disordered. 2 stretches are compositionally biased toward low complexity: residues 270–289 (GPPA…TGGA) and 310–323 (GPSS…MGGL). Over residues 324-333 (MPPPYPPPHS) the composition is skewed to pro residues.

It localises to the nucleus. The protein localises to the cytoplasm. Its function is as follows. Binds preferentially to dsRNA, but also to RNA-DNA hybrids. This is Zinc finger protein 346 from Xenopus tropicalis (Western clawed frog).